Consider the following 172-residue polypeptide: Folate transporter FolT (172 aa).

A run of 5 helical transmembrane segments spans residues 6 to 26, 35 to 55, 71 to 91, 101 to 121, and 131 to 151; these read VMIY…FLSI, FGFI…AGIV, AYFP…GVFF, VLLA…TIWL, and VLFV…AIVI.

As to quaternary structure, forms a stable energy-coupling factor (ECF) transporter complex composed of a membrane-embedded substrate-binding protein (S component), two ATP-binding proteins (A components) and a transmembrane protein (T component).

The protein localises to the cell membrane. In terms of biological role, folate-binding protein that interacts with the energy-coupling factor (ECF) ABC-transporter complex. Unlike classic ABC transporters this ECF transporter provides the energy necessary to transport a number of different substrates. The substrates themselves are bound by transmembrane, not extracytoplasmic soluble proteins. The protein is Folate transporter FolT (folT) of Clostridium novyi (strain NT).